Reading from the N-terminus, the 384-residue chain is S-adenosylmethionine synthase (384 aa).

Residue His15 coordinates ATP. Asp17 serves as a coordination point for Mg(2+). A K(+)-binding site is contributed by Glu43. L-methionine is bound by residues Glu56 and Gln99. The flexible loop stretch occupies residues Gln99–Lys109. Residues Asp164–Lys166, Arg230–Phe231, Asp239, Arg245–Lys246, Ala262, and Lys266 contribute to the ATP site. Asp239 serves as a coordination point for L-methionine. Lys270 contributes to the L-methionine binding site.

This sequence belongs to the AdoMet synthase family. As to quaternary structure, homotetramer; dimer of dimers. It depends on Mg(2+) as a cofactor. The cofactor is K(+).

Its subcellular location is the cytoplasm. The enzyme catalyses L-methionine + ATP + H2O = S-adenosyl-L-methionine + phosphate + diphosphate. Its pathway is amino-acid biosynthesis; S-adenosyl-L-methionine biosynthesis; S-adenosyl-L-methionine from L-methionine: step 1/1. Catalyzes the formation of S-adenosylmethionine (AdoMet) from methionine and ATP. The overall synthetic reaction is composed of two sequential steps, AdoMet formation and the subsequent tripolyphosphate hydrolysis which occurs prior to release of AdoMet from the enzyme. The sequence is that of S-adenosylmethionine synthase from Aliivibrio fischeri (strain ATCC 700601 / ES114) (Vibrio fischeri).